The following is a 142-amino-acid chain: Transcriptional regulator MraZ (142 aa).

SpoVT-AbrB domains are found at residues 5-51 (ASSL…PRTE) and 77-120 (AMDV…DKAT).

This sequence belongs to the MraZ family. In terms of assembly, forms oligomers.

It is found in the cytoplasm. The protein resides in the nucleoid. In Delftia acidovorans (strain DSM 14801 / SPH-1), this protein is Transcriptional regulator MraZ.